The primary structure comprises 82 residues: Small ribosomal subunit protein bS16 (82 aa).

Belongs to the bacterial ribosomal protein bS16 family.

This Vibrio vulnificus (strain CMCP6) protein is Small ribosomal subunit protein bS16.